We begin with the raw amino-acid sequence, 145 residues long: MKKSARRQSRELATQGLYQWLLSNAPSGEIDAQLRGALGYDKADKELLEAILHGVIREHATLVEALAPSLDRPIDQLSPVERAVLLIATFELTHHVETPYRVIINEAVELAKTFGGSDGYKYVNGVLDKLAAKLRPAETQARRNG.

The protein belongs to the NusB family.

Functionally, involved in transcription antitermination. Required for transcription of ribosomal RNA (rRNA) genes. Binds specifically to the boxA antiterminator sequence of the ribosomal RNA (rrn) operons. The polypeptide is Transcription antitermination protein NusB (Burkholderia cenocepacia (strain HI2424)).